Here is a 152-residue protein sequence, read N- to C-terminus: Xanthine-guanine phosphoribosyltransferase (152 aa).

5-phospho-alpha-D-ribose 1-diphosphate-binding positions include 37 to 38 (RG), arginine 69, and 88 to 96 (DDLVDTGGT). Arginine 69 lines the GMP pocket. A Mg(2+)-binding site is contributed by aspartate 89. Residues aspartate 92 and isoleucine 135 each contribute to the guanine site. Xanthine is bound by residues aspartate 92 and isoleucine 135. Residues 92–96 (DTGGT) and 134–135 (WI) each bind GMP.

The protein belongs to the purine/pyrimidine phosphoribosyltransferase family. XGPT subfamily. As to quaternary structure, homotetramer. Mg(2+) serves as cofactor.

It localises to the cell inner membrane. The enzyme catalyses GMP + diphosphate = guanine + 5-phospho-alpha-D-ribose 1-diphosphate. The catalysed reaction is XMP + diphosphate = xanthine + 5-phospho-alpha-D-ribose 1-diphosphate. It carries out the reaction IMP + diphosphate = hypoxanthine + 5-phospho-alpha-D-ribose 1-diphosphate. The protein operates within purine metabolism; GMP biosynthesis via salvage pathway; GMP from guanine: step 1/1. It participates in purine metabolism; XMP biosynthesis via salvage pathway; XMP from xanthine: step 1/1. Its function is as follows. Purine salvage pathway enzyme that catalyzes the transfer of the ribosyl-5-phosphate group from 5-phospho-alpha-D-ribose 1-diphosphate (PRPP) to the N9 position of the 6-oxopurines guanine and xanthine to form the corresponding ribonucleotides GMP (guanosine 5'-monophosphate) and XMP (xanthosine 5'-monophosphate), with the release of PPi. To a lesser extent, also acts on hypoxanthine. The protein is Xanthine-guanine phosphoribosyltransferase of Salmonella choleraesuis (strain SC-B67).